A 159-amino-acid chain; its full sequence is ATP synthase subunit b (159 aa).

Residues Val4–Leu24 traverse the membrane as a helical segment.

The protein belongs to the ATPase B chain family. In terms of assembly, F-type ATPases have 2 components, F(1) - the catalytic core - and F(0) - the membrane proton channel. F(1) has five subunits: alpha(3), beta(3), gamma(1), delta(1), epsilon(1). F(0) has three main subunits: a(1), b(2) and c(10-14). The alpha and beta chains form an alternating ring which encloses part of the gamma chain. F(1) is attached to F(0) by a central stalk formed by the gamma and epsilon chains, while a peripheral stalk is formed by the delta and b chains.

It is found in the cell inner membrane. In terms of biological role, f(1)F(0) ATP synthase produces ATP from ADP in the presence of a proton or sodium gradient. F-type ATPases consist of two structural domains, F(1) containing the extramembraneous catalytic core and F(0) containing the membrane proton channel, linked together by a central stalk and a peripheral stalk. During catalysis, ATP synthesis in the catalytic domain of F(1) is coupled via a rotary mechanism of the central stalk subunits to proton translocation. Functionally, component of the F(0) channel, it forms part of the peripheral stalk, linking F(1) to F(0). This Acidithiobacillus ferrooxidans (strain ATCC 23270 / DSM 14882 / CIP 104768 / NCIMB 8455) (Ferrobacillus ferrooxidans (strain ATCC 23270)) protein is ATP synthase subunit b.